We begin with the raw amino-acid sequence, 143 residues long: Translation initiation factor 2 subunit beta (143 aa).

The protein belongs to the eIF-2-beta/eIF-5 family. Heterotrimer composed of an alpha, a beta and a gamma chain.

EIF-2 functions in the early steps of protein synthesis by forming a ternary complex with GTP and initiator tRNA. In Methanocaldococcus jannaschii (strain ATCC 43067 / DSM 2661 / JAL-1 / JCM 10045 / NBRC 100440) (Methanococcus jannaschii), this protein is Translation initiation factor 2 subunit beta (eif2b).